The sequence spans 474 residues: tRNA-2-methylthio-N(6)-dimethylallyladenosine synthase (474 aa).

The 118-residue stretch at 3 to 120 folds into the MTTase N-terminal domain; sequence KKLLIKTWGC…LPQMIKDSQS (118 aa). [4Fe-4S] cluster-binding residues include Cys12, Cys49, Cys83, Cys157, Cys161, and Cys164. Residues 143–375 form the Radical SAM core domain; the sequence is RADGVTAFVS…QQQINTQAMR (233 aa). The TRAM domain maps to 378-441; the sequence is RQMLNTEQRI…TNSLRGELVR (64 aa).

The protein belongs to the methylthiotransferase family. MiaB subfamily. As to quaternary structure, monomer. It depends on [4Fe-4S] cluster as a cofactor.

The protein localises to the cytoplasm. The catalysed reaction is N(6)-dimethylallyladenosine(37) in tRNA + (sulfur carrier)-SH + AH2 + 2 S-adenosyl-L-methionine = 2-methylsulfanyl-N(6)-dimethylallyladenosine(37) in tRNA + (sulfur carrier)-H + 5'-deoxyadenosine + L-methionine + A + S-adenosyl-L-homocysteine + 2 H(+). Catalyzes the methylthiolation of N6-(dimethylallyl)adenosine (i(6)A), leading to the formation of 2-methylthio-N6-(dimethylallyl)adenosine (ms(2)i(6)A) at position 37 in tRNAs that read codons beginning with uridine. This Photobacterium profundum (strain SS9) protein is tRNA-2-methylthio-N(6)-dimethylallyladenosine synthase.